We begin with the raw amino-acid sequence, 197 residues long: UPF0301 protein A2cp1_4106 (197 aa).

It belongs to the UPF0301 (AlgH) family.

This Anaeromyxobacter dehalogenans (strain 2CP-1 / ATCC BAA-258) protein is UPF0301 protein A2cp1_4106.